The primary structure comprises 27 residues: Delta-conotoxin SuVIA (27 aa).

Disulfide bonds link Cys1–Cys17, Cys8–Cys21, and Cys16–Cys25.

Belongs to the conotoxin O1 superfamily. Expressed by the venom duct, in the proximal part (indicative of a defensive role).

The protein resides in the secreted. Functionally, this toxin activates voltage-gated sodium channels (Nav1.3/SCN3A (EC(50)=3.98 nM), Nav1.4/SCN4A (EC(50)=4.99 nM), Nav1.6/SCN8A (EC(50)=1.27 nM) and Nav1.7/SCN9A (EC(50)=2.42 nM)). It shifts the voltage-dependence of activation to more hyperpolarized potentials but has only little effect on channel inactivation. In vivo, it induces nocifensive or pain-like behaviors in mice when injected intraplantarly. This is coherent with the specific defensive role deduced from its proximal position in the venom gland. The chain is Delta-conotoxin SuVIA from Conus suturatus (Sutured cone).